We begin with the raw amino-acid sequence, 457 residues long: Chromogranin-A (457 aa).

The N-terminal stretch at 1 to 18 is a signal peptide; sequence MRSAAVLALLLCAGQVTA. C35 and C56 form a disulfide bridge. The segment at 41 to 59 is O-glycosylated at one site only in cerebrospinal fluid; that stretch reads SDTLSKPSPMPVSQECFET. The segment at 88–440 is disordered; that stretch reads KERAHQQKKH…DQELESLSAI (353 aa). The segment covering 116-144 has biased composition (basic and acidic residues); the sequence is ELKEAVEEPSSKDVMEKREDSKEAEKSGE. Position 142 is a phosphoserine (S142). The span at 171 to 180 shows a compositional bias: acidic residues; the sequence is GEEEEEEEEA. 2 O-linked (GalNAc...) threonine glycosylation sites follow: T181 and T183. Residues 181–191 form an O-glycosylated at one site only in cerebrospinal fluid region; it reads TNTHPPASLPS. Positions 182-191 are enriched in polar residues; that stretch reads NTHPPASLPS. At Y194 the chain carries Phosphotyrosine. Phosphoserine is present on residues S203 and S218. Residues 229-249 show a composition bias toward acidic residues; the sequence is EEEEEEEEAEAGEEAVPEEEG. An O-linked (GalNAc...) threonine glycan is attached at T251. 2 stretches are compositionally biased toward basic and acidic residues: residues 263-272 and 291-303; these read KEIRKGESRS and PEGK…SQQK. Residues S270 and S300 each carry the phosphoserine modification. Residue G319 is modified to Glycine amide. Phosphoserine is present on residues S322, S333, and S371. Residues 330–360 show a composition bias toward basic and acidic residues; the sequence is ERLSKEWEDSKRWSKMDQLAKELTAEKRLEG. Position 372 is a methionine sulfoxide (M372). Phosphoserine is present on residues S398, S402, S424, and S438. Positions 414 to 431 are enriched in basic and acidic residues; sequence YPEEKKEEEGSANRRPED. O-linked (Xyl...) (chondroitin sulfate) serine glycosylation is present at S424. R456 carries the arginine amide modification.

Belongs to the chromogranin/secretogranin protein family. Self-interacts; self-assembly is promoted in vitro by chondroitin sulfate attachment which occurs at mildly acidic pH conditions. Interacts with SCG3. Interacts with ITPR1 in the secretory granules. Sulfated on tyrosine residues and/or contains sulfated glycans. Post-translationally, O-glycosylated with core 1 or possibly core 8 glycans. Contains chondroitin sulfate (CS); CS attachment is pH-dependent, being observed at mildly acidic conditions of pH 5 but not at neutral pH, and promotes self-assembly in vitro. In terms of processing, proteolytic processing gives rise to an additional longer form of catestatin (residues 358-390) which displays a less potent catecholamine release-inhibitory activity. Plasmin-mediated proteolytic processing can give rise to additional shorter and longer forms of catestatin peptides. Detected in cerebrospinal fluid (at protein level). Detected in urine (at protein level). As to expression, found in the brain.

The protein localises to the secreted. Its subcellular location is the cytoplasmic vesicle. It is found in the secretory vesicle. The protein resides in the neuronal dense core vesicle. Functionally, strongly inhibits glucose induced insulin release from the pancreas. In terms of biological role, inhibits catecholamine release from chromaffin cells and noradrenergic neurons by acting as a non-competitive nicotinic cholinergic antagonist. Displays antibacterial activity against Gram-positive bacteria S.aureus and M.luteus, and Gram-negative bacteria E.coli and P.aeruginosa. Can induce mast cell migration, degranulation and production of cytokines and chemokines. Acts as a potent scavenger of free radicals in vitro. May play a role in the regulation of cardiac function and blood pressure. Regulates granule biogenesis in endocrine cells by up-regulating the transcription of protease nexin 1 (SERPINE2) via a cAMP-PKA-SP1 pathway. This leads to inhibition of granule protein degradation in the Golgi complex which in turn promotes granule formation. The protein is Chromogranin-A (CHGA) of Homo sapiens (Human).